Consider the following 384-residue polypeptide: Lipid-A-disaccharide synthase (384 aa).

The protein belongs to the LpxB family.

It catalyses the reaction a lipid X + a UDP-2-N,3-O-bis[(3R)-3-hydroxyacyl]-alpha-D-glucosamine = a lipid A disaccharide + UDP + H(+). It participates in bacterial outer membrane biogenesis; LPS lipid A biosynthesis. Condensation of UDP-2,3-diacylglucosamine and 2,3-diacylglucosamine-1-phosphate to form lipid A disaccharide, a precursor of lipid A, a phosphorylated glycolipid that anchors the lipopolysaccharide to the outer membrane of the cell. The polypeptide is Lipid-A-disaccharide synthase (Gloeothece citriformis (strain PCC 7424) (Cyanothece sp. (strain PCC 7424))).